We begin with the raw amino-acid sequence, 111 residues long: Anti-adapter protein IraM (111 aa).

Belongs to the IraM/RssC family.

It is found in the cytoplasm. Involved in the stabilization of the sigma stress factor RpoS. This Cronobacter sakazakii (strain ATCC BAA-894) (Enterobacter sakazakii) protein is Anti-adapter protein IraM.